Reading from the N-terminus, the 284-residue chain is MDAIKKKMQAMKLEKDNAMDRALLCEQQARDANIRAEKAEEEARSLQKKIQQIENDLDQTMEQLMQVNAKLDEKDKALQNAESEVAALNRRIQLLEEDLERSEERLATATAKLAEASQAADESERARKILESKGLADEERMDALENQLKEARFMAEEADKKYDEVARKLAMVEADLERAEERAETGESKIVELEEELRVVGNNLKSLEVSEEKANLREEEYKQQIKTLNTRLKEAEARAEFAERSVQKLQKEVDRLEDELVHEKEKYKYICDDLDMTFTELIGN.

The stretch at 1-284 (MDAIKKKMQA…DMTFTELIGN (284 aa)) forms a coiled coil.

It belongs to the tropomyosin family. Homodimer.

Its function is as follows. Tropomyosin, in association with the troponin complex, plays a central role in the calcium dependent regulation of muscle contraction. The polypeptide is Tropomyosin (Blattella germanica (German cockroach)).